A 675-amino-acid chain; its full sequence is Protein distal antenna (675 aa).

The HTH psq-type domain maps to 5-56 (TKGKRPLRHLTATDKIDAIQRIHDGESKASVARDIGVPESTLRGWCKNEEKL). Positions 32 to 52 (KASVARDIGVPESTLRGWCKN) form a DNA-binding region, H-T-H motif. 5 disordered regions span residues 239-269 (QSLRNARPKANTSQSPRTSNLSDVNGDKNPS), 337-393 (LYSS…PEDT), 458-534 (LNII…SKCN), 546-596 (FQNP…AHKS), and 655-675 (ERQQQNAVSSGEERTRVRRRK). Over residues 339–368 (SSMPRPSSPQQSSSPPQQHQQVQHHPSTQT) the composition is skewed to low complexity. Residues 369 to 384 (PTPPIVSTPQPTPPSS) are compositionally biased toward pro residues. Residues 469–478 (VKSEPEDLSN) show a composition bias toward basic and acidic residues. The span at 479-493 (HNHSSSNAAAVAAPA) shows a compositional bias: low complexity. Residues 499 to 508 (FNPSPSTSAK) show a composition bias toward polar residues. A compositionally biased stretch (acidic residues) spans 513–528 (QEDDEEQAGPADDESP). A compositionally biased stretch (low complexity) spans 559–579 (NLSIRSNNSPRRRSVSPAVSN).

In terms of assembly, homomers. Interacts with itself, danr, ey and dac to form a complex (or complexes) containing the RD factors.

The protein resides in the nucleus. Probable transcription factor with a role in the retinal determination (RD) network. Contributes to differentiation of antenna-specific characteristics. In Aedes aegypti (Yellowfever mosquito), this protein is Protein distal antenna.